The chain runs to 285 residues: tRNA pseudouridine synthase A (285 aa).

The Nucleophile role is filled by Asp69. Tyr127 provides a ligand contact to substrate.

It belongs to the tRNA pseudouridine synthase TruA family. In terms of assembly, homodimer.

It catalyses the reaction uridine(38/39/40) in tRNA = pseudouridine(38/39/40) in tRNA. Its function is as follows. Formation of pseudouridine at positions 38, 39 and 40 in the anticodon stem and loop of transfer RNAs. The chain is tRNA pseudouridine synthase A from Pseudomonas aeruginosa (strain ATCC 15692 / DSM 22644 / CIP 104116 / JCM 14847 / LMG 12228 / 1C / PRS 101 / PAO1).